Here is a 577-residue protein sequence, read N- to C-terminus: Isocitrate dehydrogenase kinase/phosphatase (577 aa).

ATP contacts are provided by residues 318-324 (APGVRGM) and lysine 339. Aspartate 374 is a catalytic residue.

This sequence belongs to the AceK family.

Its subcellular location is the cytoplasm. It carries out the reaction L-seryl-[isocitrate dehydrogenase] + ATP = O-phospho-L-seryl-[isocitrate dehydrogenase] + ADP + H(+). Functionally, bifunctional enzyme which can phosphorylate or dephosphorylate isocitrate dehydrogenase (IDH) on a specific serine residue. This is a regulatory mechanism which enables bacteria to bypass the Krebs cycle via the glyoxylate shunt in response to the source of carbon. When bacteria are grown on glucose, IDH is fully active and unphosphorylated, but when grown on acetate or ethanol, the activity of IDH declines drastically concomitant with its phosphorylation. This Pseudomonas aeruginosa (strain LESB58) protein is Isocitrate dehydrogenase kinase/phosphatase.